The following is a 160-amino-acid chain: UPF0225 protein PputW619_1140 (160 aa).

It belongs to the UPF0225 family.

This Pseudomonas putida (strain W619) protein is UPF0225 protein PputW619_1140.